Reading from the N-terminus, the 356-residue chain is Protein RecA (356 aa).

An ATP-binding site is contributed by 68–75 (GQESSGKT).

It belongs to the RecA family.

The protein localises to the cytoplasm. In terms of biological role, can catalyze the hydrolysis of ATP in the presence of single-stranded DNA, the ATP-dependent uptake of single-stranded DNA by duplex DNA, and the ATP-dependent hybridization of homologous single-stranded DNAs. It interacts with LexA causing its activation and leading to its autocatalytic cleavage. The protein is Protein RecA of Thermotoga sp. (strain RQ2).